We begin with the raw amino-acid sequence, 388 residues long: MTTVSRHYVLAAGGTGGHLIPAFALAVELDRRGHHVALVTDERGAKIPGKPDFLPAHVLPAGRLGKNPVALFKGLRAIWQGRAMALRLFESFEPSCVIGFGGYPALPALLAAHAARIPTVIHEQNAVLGRVNRLLAKRVDAIATAYGEVDRLDPKLWGKVHRVGNPVRPDVLALRGEPFPEFTEDSLFRVLVTGGSQGASILSEVVPDGLAMLPPALRHRLQVTQQCRPEDLEVVRARYAAHEIPAELGTYFEDMQARLAGTHLFIGRAGASTIAELTAVGRPAILVPLPIATDDHQAANTREVVAAGGARAIRQSGFTPKELAKQIQAMAQHPHTLANAAHAAWNCGLPNAVKDLADLVESFGASPIMDVIRLDSTVSAASGQEQLA.

UDP-N-acetyl-alpha-D-glucosamine is bound by residues 15-17 (TGG), N125, R168, S196, and Q297.

Belongs to the glycosyltransferase 28 family. MurG subfamily.

The protein resides in the cell inner membrane. It catalyses the reaction di-trans,octa-cis-undecaprenyl diphospho-N-acetyl-alpha-D-muramoyl-L-alanyl-D-glutamyl-meso-2,6-diaminopimeloyl-D-alanyl-D-alanine + UDP-N-acetyl-alpha-D-glucosamine = di-trans,octa-cis-undecaprenyl diphospho-[N-acetyl-alpha-D-glucosaminyl-(1-&gt;4)]-N-acetyl-alpha-D-muramoyl-L-alanyl-D-glutamyl-meso-2,6-diaminopimeloyl-D-alanyl-D-alanine + UDP + H(+). The protein operates within cell wall biogenesis; peptidoglycan biosynthesis. Functionally, cell wall formation. Catalyzes the transfer of a GlcNAc subunit on undecaprenyl-pyrophosphoryl-MurNAc-pentapeptide (lipid intermediate I) to form undecaprenyl-pyrophosphoryl-MurNAc-(pentapeptide)GlcNAc (lipid intermediate II). The chain is UDP-N-acetylglucosamine--N-acetylmuramyl-(pentapeptide) pyrophosphoryl-undecaprenol N-acetylglucosamine transferase from Novosphingobium aromaticivorans (strain ATCC 700278 / DSM 12444 / CCUG 56034 / CIP 105152 / NBRC 16084 / F199).